Reading from the N-terminus, the 204-residue chain is Leucyl/phenylalanyl-tRNA--protein transferase (204 aa).

The protein belongs to the L/F-transferase family.

It localises to the cytoplasm. It carries out the reaction N-terminal L-lysyl-[protein] + L-leucyl-tRNA(Leu) = N-terminal L-leucyl-L-lysyl-[protein] + tRNA(Leu) + H(+). The enzyme catalyses N-terminal L-arginyl-[protein] + L-leucyl-tRNA(Leu) = N-terminal L-leucyl-L-arginyl-[protein] + tRNA(Leu) + H(+). It catalyses the reaction L-phenylalanyl-tRNA(Phe) + an N-terminal L-alpha-aminoacyl-[protein] = an N-terminal L-phenylalanyl-L-alpha-aminoacyl-[protein] + tRNA(Phe). Functions in the N-end rule pathway of protein degradation where it conjugates Leu, Phe and, less efficiently, Met from aminoacyl-tRNAs to the N-termini of proteins containing an N-terminal arginine or lysine. In Agrobacterium fabrum (strain C58 / ATCC 33970) (Agrobacterium tumefaciens (strain C58)), this protein is Leucyl/phenylalanyl-tRNA--protein transferase.